The sequence spans 531 residues: Peptide chain release factor 3 (531 aa).

The region spanning Arg-10–Lys-278 is the tr-type G domain. GTP contacts are provided by residues Ser-19–Thr-26, Asp-87–His-91, and Asn-141–Asp-144.

It belongs to the TRAFAC class translation factor GTPase superfamily. Classic translation factor GTPase family. PrfC subfamily.

It localises to the cytoplasm. Increases the formation of ribosomal termination complexes and stimulates activities of RF-1 and RF-2. It binds guanine nucleotides and has strong preference for UGA stop codons. It may interact directly with the ribosome. The stimulation of RF-1 and RF-2 is significantly reduced by GTP and GDP, but not by GMP. This is Peptide chain release factor 3 from Neisseria meningitidis serogroup B (strain ATCC BAA-335 / MC58).